We begin with the raw amino-acid sequence, 362 residues long: Fiber protein (362 aa).

The protein belongs to the adenoviridae fiber family. Homotrimer. Interacts with host receptor CXCAR. Interacts (via N-terminal tail region) with pentons.

It localises to the virion. It is found in the host nucleus. Its function is as follows. Forms spikes that protrude from each vertex of the icosahedral capsid. Interacts with host receptor CXCAR to provide virion initial attachment to target cell. Fiber proteins are shed during virus entry, when virus is still at the cell surface. The chain is Fiber protein from Homo sapiens (Human).